The following is a 194-amino-acid chain: Probable thymidylate kinase (194 aa).

Residue 7–14 (GIDGSGKT) coordinates ATP.

It belongs to the thymidylate kinase family.

The catalysed reaction is dTMP + ATP = dTDP + ADP. The polypeptide is Probable thymidylate kinase (tmk) (Methanothermobacter thermautotrophicus (strain ATCC 29096 / DSM 1053 / JCM 10044 / NBRC 100330 / Delta H) (Methanobacterium thermoautotrophicum)).